The primary structure comprises 65 residues: Disintegrin VLO4 (65 aa).

The 65-residue stretch at 1 to 65 folds into the Disintegrin domain; the sequence is MNSGNPCCDP…PDCPRNPWKG (65 aa). Disulfide bonds link Cys-7-Cys-30, Cys-21-Cys-27, Cys-26-Cys-51, and Cys-39-Cys-58. The Cell attachment site signature appears at 43-45; it reads RGD.

This sequence belongs to the disintegrin family. Dimeric disintegrin subfamily. Homodimer; disulfide-linked. In terms of tissue distribution, expressed by the venom gland.

It is found in the secreted. In terms of biological role, poor inhibitor of platelet aggregation. The disintegrin inhibits the adhesion of cells expressing the RGD-dependent integrin alpha-5/beta-1 (ITGA5/ITGB1) to immobilized fibronectin. Inhibition on alpha-2b/beta-3 (ITGA2B/ITGB3) is low. This chain is Disintegrin VLO4, found in Macrovipera lebetina obtusa (Levant blunt-nosed viper).